The sequence spans 76 residues: Monocarboxylate transporter 1 (76 aa).

3 helical membrane-spanning segments follow: residues 1–18 (LSIL…MGLA), 28–48 (IQYF…LAPL), and 53–73 (IGFC…SSVL). Asp8 contributes to the H(+) binding site. Position 12 (Arg12) interacts with (S)-lactate.

Belongs to the major facilitator superfamily. Monocarboxylate porter (TC 2.A.1.13) family. As to quaternary structure, interacts with BSG; interaction mediates SLC16A1 targeting to the plasma membrane. Interacts with EMB; interaction mediates SLC16A1 targeting to the plasma membrane.

It localises to the cell membrane. Its subcellular location is the basolateral cell membrane. It is found in the apical cell membrane. The catalysed reaction is (S)-lactate(in) + H(+)(in) = (S)-lactate(out) + H(+)(out). It carries out the reaction acetate(out) + H(+)(out) = acetate(in) + H(+)(in). It catalyses the reaction acetoacetate(out) + H(+)(out) = acetoacetate(in) + H(+)(in). The enzyme catalyses pyruvate(out) + H(+)(out) = pyruvate(in) + H(+)(in). The catalysed reaction is (R)-3-hydroxybutanoate(out) + H(+)(out) = (R)-3-hydroxybutanoate(in) + H(+)(in). It carries out the reaction 3-methyl-2-oxobutanoate(out) + H(+)(out) = 3-methyl-2-oxobutanoate(in) + H(+)(in). It catalyses the reaction 4-methyl-2-oxopentanoate(out) + H(+)(out) = 4-methyl-2-oxopentanoate(in) + H(+)(in). The enzyme catalyses succinate(in) + 2 H(+)(in) = succinate(out) + 2 H(+)(out). Its function is as follows. Bidirectional proton-coupled monocarboxylate transporter. Catalyzes the rapid transport across the plasma membrane of many monocarboxylates such as lactate, pyruvate, acetate and the ketone bodies acetoacetate and beta-hydroxybutyrate, and thus contributes to the maintenance of intracellular pH. The transport direction is determined by the proton motive force and the concentration gradient of the substrate monocarboxylate. MCT1 is a major lactate exporter. Plays a role in cellular responses to a high-fat diet by modulating the cellular levels of lactate and pyruvate that contribute to the regulation of central metabolic pathways and insulin secretion, with concomitant effects on plasma insulin levels and blood glucose homeostasis. Facilitates the protonated monocarboxylate form of succinate export, that its transient protonation upon muscle cell acidification in exercising muscle and ischemic heart. Functions via alternate outward- and inward-open conformation states. Protonation and deprotonation is essential for the conformational transition. In Meriones unguiculatus (Mongolian jird), this protein is Monocarboxylate transporter 1 (SLC16A1).